The chain runs to 71 residues: Gas vesicle protein A (71 aa).

An alpha helix 1 region spans residues 12-22 (LAEVIDRILDK). The segment at 26 to 34 (IDAWARVSL) is beta-strand 1. Residues 35 to 37 (VGI) form a beta turn region. The beta-strand 2 stretch occupies residues 38-46 (ELLAIEARV). The interval 51–70 (VETYLKYAEAVGLTQXAXXA) is alpha helix 2.

It belongs to the gas vesicle GvpA family. The gas vesicle shell is 2 nm thick and consists of a single layer of this protein. It forms helical ribs nearly perpendicular to the long axis of the vesicle.

It localises to the gas vesicle shell. Gas vesicles are hollow, gas filled proteinaceous nanostructures found in some microorganisms. During planktonic growth they allow positioning of the organism at a favorable depth for light or nutrient acquisition. GvpA forms the protein shell. The sequence is that of Gas vesicle protein A from Microcystis sp. (strain BC 84/1).